Consider the following 1141-residue polypeptide: Serine-aspartate repeat-containing protein E (1141 aa).

An N-terminal signal peptide occupies residues 1-52; sequence MINRDNKKAITKKGMISNRLNKFSIRKYTVGTASILVGTTLIFGLGNQEAKA. Positions 23-34 match the YSIRK-G/S signaling motif motif; sequence FSIRKYTVGTAS. The tract at residues 53–601 is ligand binding A region; the sequence is AENTSTENAK…GDGTVKPEEK (549 aa). Positions 54 to 248 are disordered; the sequence is ENTSTENAKQ…RSTKPVATAP (195 aa). Residues 61–75 are compositionally biased toward basic and acidic residues; the sequence is AKQDDATTSDNKEVV. The segment covering 77–90 has biased composition (low complexity); that stretch reads ETENNSTTENDSTN. The span at 92–108 shows a compositional bias: basic and acidic residues; the sequence is IKKETNTDSQPEAKEES. Positions 109–126 are enriched in low complexity; the sequence is TTSSTQQQQNNVTATTET. Basic and acidic residues predominate over residues 130-145; that stretch reads NIEKENVKPSTDKTAT. Residues 159 to 207 are compositionally biased toward polar residues; that stretch reads NYTNNDVTTKPSTSEIQTKPTTPQESTNIENSQPQPTPSKVDNQVTDAT. Residues 216 to 241 are compositionally biased toward basic and acidic residues; the sequence is SKEELKNNPEKLKELVRNDNNTDRST. 3 consecutive CNA-B domains span residues 602-714, 715-824, and 825-935; these read LYKI…YKEP, KYNL…YKTP, and KYSL…EEDT. The disordered stretch occupies residues 899-1117; that stretch reads VTNTTEDDKD…GSENNGSNNA (219 aa). Composition is skewed to acidic residues over residues 903–913 and 930–1080; these read TEDDKDADGGE and YFEE…DSDS. An LPXTG sorting signal motif is present at residues 1104–1108; the sequence is LPETG. Thr-1107 carries the pentaglycyl murein peptidoglycan amidated threonine modification. Residues 1108–1141 constitute a propeptide, removed by sortase; that stretch reads GSENNGSNNATLFGGLFAALGSLLLFGRRKKQNK.

Belongs to the serine-aspartate repeat-containing protein (SDr) family. As to quaternary structure, interacts with host complement factor H/CFAH (via C-terminus). Interacts with host complement regulator C4BPA.

The protein resides in the secreted. The protein localises to the cell wall. Cell surface-associated calcium-binding protein which plays an important role in adhesion and pathogenesis. Contributes to the resistance to killing by innate immune components in blood and thus attenuates bacterial clearance by interacting with host complement factor H/CFAH and modulating its activity. Also inhibits bacterial opsonization and killing by interacting with host complement regulator C4BPA and thus inhibiting classical complement pathway activation. The protein is Serine-aspartate repeat-containing protein E (sdrE) of Staphylococcus aureus (strain N315).